A 773-amino-acid chain; its full sequence is MGRLNRFRLGKDGRREQASLSRRGFLVTSLGAGVMFGFARPSSANQIFPLDRSLPGDGAFEPTIWCSIAPDGEITVNIIRAEMGQHIGTALARIIADEMEADWSKVRINYVDTDPKWGLMVTGGSWSVWMTWDVFRQAGAATRTAMVEEGARLLGTTPDKCTVASSIVSAGGKQISFGDIVAKGHPSHAFTPEEMAKLPLKPASERRLIGNAELKALDIPAKTNGTAIYGIDAKVEGMLYGRPKMPPTRYGSKVRSVDDTEAKKIKGYVRYLLIDDPSQVVQGWVVVLAESYSAAIRATDALKVEWTPGETIHTSERDIQDRGRELINNKAGGVYIFNDDGVDQAFGSAHTVMDQEYTCASVLHYQLEPTNALAFEKDGVYEIHAGNQWQSLILPTLAKSLQVPESKVILRSYLLGGGFGRRLNGDYMIPAALASKALGGKPVKLILTRSDDMQFDSFRSPSVQRVRMAFDASDRITAMDYQAAAGWPTGVMAEAFMEKGVDGKPYDQFAIAGGDHWYEVGAFRVRALRNDLAEKTFRPGWLRSVSPGWTSWGVECFLDEVAHRQKKDPAQFRLELLTGQGRNKGQAPDSVGGALRQAAVVRRLMEKVNWGKTSLPKDTAMGLATTAGQERGMPTWDRCVAQVHVDRSTGVVTCQKLTILVDAGTVVDPDGAKAQTEGAALWGLSMVLFENTEIVNGMPVDRNLNTYTPLRIADTPEMDIEFLPSTEKPMGLGEPGTTVVGPAIGNAIFNAVGVRLRHMPVRPADVLRGLQNG.

Positions methionine 1–alanine 44 form a signal peptide, tat-type signal.

Requires pyrroloquinoline quinone as cofactor. Post-translationally, predicted to be exported by the Tat system. The position of the signal peptide cleavage has been experimentally proven.

Its subcellular location is the cell inner membrane. It catalyses the reaction an aldehyde + a quinone + H2O = a quinol + a carboxylate + H(+). This chain is Membrane-bound aldehyde dehydrogenase [pyrroloquinoline-quinone], found in Gluconacetobacter polyoxogenes (Acetobacter polyoxogenes).